The primary structure comprises 262 residues: Insulin-like growth factor-binding protein 1 (262 aa).

The N-terminal stretch at 1-25 is a signal peptide; the sequence is MPEVPAVRAWPLLLSLALQLGAAAG. The IGFBP N-terminal domain occupies 28-108; the sequence is QPLHCAPCSA…TRGQGACMPA (81 aa). Cystine bridges form between cysteine 32–cysteine 59, cysteine 35–cysteine 61, cysteine 43–cysteine 62, cysteine 50–cysteine 65, cysteine 72–cysteine 85, and cysteine 79–cysteine 105. The interval 101–133 is disordered; the sequence is GQGACMPAPSAEATETKDPAAPETTSPESTEMT. Over residues 121–131 the composition is skewed to low complexity; sequence APETTSPESTE. Phosphoserine is present on residues serine 126, serine 129, and serine 147. Tyrosine 161 carries the post-translational modification Phosphotyrosine. The Thyroglobulin type-1 domain occupies 176-254; the sequence is KEPCQRELYK…STAVRGDPKC (79 aa). Cystine bridges form between cysteine 179–cysteine 209, cysteine 220–cysteine 231, and cysteine 233–cysteine 254. Serine 245 is modified (phosphoserine). The Cell attachment site signature appears at 249-251; sequence RGD.

Binds equally well IGF1 and IGF2. Interacts with integrin ITGA5:ITGB1. Interacts with VHL; this interaction inhibits HIF1A degradation.

It localises to the secreted. Functionally, multifunctional protein that plays a critical role in regulating the availability of IGFs such as IGF1 and IGF2 to their receptors and thereby regulates IGF-mediated cellular processes including cell migration, proliferation, differentiation or apoptosis in a cell-type specific manner. Also plays a positive role in cell migration by interacting with integrin ITGA5:ITGB1 through its RGD motif. Mechanistically, binding to integrins leads to activation of focal adhesion kinase/PTK2 and stimulation of the mitogen-activated protein kinase (MAPK) pathway. Regulates cardiomyocyte apoptosis by suppressing HIF-1alpha/HIF1A degradation through ubiquitination. This chain is Insulin-like growth factor-binding protein 1 (IGFBP1), found in Sus scrofa (Pig).